Here is a 436-residue protein sequence, read N- to C-terminus: Proteasome-activating nucleotidase (436 aa).

Residues 15-97 (EELCRLYRSL…LKSESEQLRS (83 aa)) are a coiled coil. ATP contacts are provided by residues 222 to 227 (GTGKTL) and His361. Residues 434–436 (MFA) are docks into pockets in the proteasome alpha-ring to cause gate opening.

This sequence belongs to the AAA ATPase family. As to quaternary structure, homohexamer. The hexameric complex has a two-ring architecture resembling a top hat that caps the 20S proteasome core at one or both ends. Upon ATP-binding, the C-terminus of PAN interacts with the alpha-rings of the proteasome core by binding to the intersubunit pockets.

It is found in the cytoplasm. Functionally, ATPase which is responsible for recognizing, binding, unfolding and translocation of substrate proteins into the archaeal 20S proteasome core particle. Is essential for opening the gate of the 20S proteasome via an interaction with its C-terminus, thereby allowing substrate entry and access to the site of proteolysis. Thus, the C-termini of the proteasomal ATPase function like a 'key in a lock' to induce gate opening and therefore regulate proteolysis. Unfolding activity requires energy from ATP hydrolysis, whereas ATP binding alone promotes ATPase-20S proteasome association which triggers gate opening, and supports translocation of unfolded substrates. The protein is Proteasome-activating nucleotidase of Methanoregula boonei (strain DSM 21154 / JCM 14090 / 6A8).